Reading from the N-terminus, the 281-residue chain is 4-diphosphocytidyl-2-C-methyl-D-erythritol kinase (281 aa).

The active site involves lysine 11. Residue proline 95–serine 105 coordinates ATP. Aspartate 137 is a catalytic residue.

This sequence belongs to the GHMP kinase family. IspE subfamily.

The enzyme catalyses 4-CDP-2-C-methyl-D-erythritol + ATP = 4-CDP-2-C-methyl-D-erythritol 2-phosphate + ADP + H(+). Its pathway is isoprenoid biosynthesis; isopentenyl diphosphate biosynthesis via DXP pathway; isopentenyl diphosphate from 1-deoxy-D-xylulose 5-phosphate: step 3/6. Its function is as follows. Catalyzes the phosphorylation of the position 2 hydroxy group of 4-diphosphocytidyl-2C-methyl-D-erythritol. The sequence is that of 4-diphosphocytidyl-2-C-methyl-D-erythritol kinase from Geobacter metallireducens (strain ATCC 53774 / DSM 7210 / GS-15).